A 148-amino-acid chain; its full sequence is Protein SOB FIVE-LIKE 1 (148 aa).

The span at 1–10 shows a compositional bias: basic and acidic residues; that stretch reads MESPRNHGGS. 2 disordered regions span residues 1-20 and 33-148; these read MESP…SCES and NDQS…SKTK. The SOFL-A signature appears at 20-25; sequence SGWTMY. The span at 54–76 shows a compositional bias: acidic residues; that stretch reads DGYENDDGDTSDDGGDEESDDSM. Residues 75–84 carry the SOFL-B motif; sequence SMASDASSGP. A compositionally biased stretch (basic residues) spans 91 to 101; sequence HINKHAARKNG. Residues 111-128 are compositionally biased toward basic and acidic residues; that stretch reads QHTEKTISNEGEKSDLKA.

This sequence belongs to the SOFL plant protein family. As to expression, predominantly expressed in the vascular tissues of seedlings, developing leaves, flowers and siliques, but barely detectable in roots and stems.

The protein resides in the cytoplasm. It localises to the nucleus. Involved in cytokinin-mediated development. Together with SOFL2, triggers the endogenous content of specific bioactive cytokinins derived from the biosynthetic intermediates trans-zeatin riboside monophosphate (tZRMP) and N(6)-(Delta(2)-isopentenyl)adenosine monophosphate (iPRMP) such as N-glucosides trans-zeatin 7-glucoside (tZ7G), cis-zeatin 7-glucoside (cZ7G) and N(6)-(Delta(2)-isopentenyl)adenine 7-glucoside (iP7G). The protein is Protein SOB FIVE-LIKE 1 of Arabidopsis thaliana (Mouse-ear cress).